A 276-amino-acid polypeptide reads, in one-letter code: Undecaprenyl-diphosphatase (276 aa).

The next 7 helical transmembrane spans lie at 12 to 34, 43 to 63, 85 to 105, 108 to 128, 185 to 205, 218 to 238, and 249 to 269; these read LGIV…IVVG, TATA…MWEF, FNLL…ADLI, WLFN…IMLW, TEFS…YSLF, IFAI…RALL, and FAWY…LHLI.

The protein belongs to the UppP family.

The protein localises to the cell inner membrane. It carries out the reaction di-trans,octa-cis-undecaprenyl diphosphate + H2O = di-trans,octa-cis-undecaprenyl phosphate + phosphate + H(+). Its function is as follows. Catalyzes the dephosphorylation of undecaprenyl diphosphate (UPP). Confers resistance to bacitracin. This is Undecaprenyl-diphosphatase from Ectopseudomonas mendocina (strain ymp) (Pseudomonas mendocina).